The chain runs to 394 residues: Myb-like protein R (394 aa).

Transmembrane regions (helical) follow at residues 11–31 (IGAQIITTVITLFTGVFEFII) and 99–119 (FFIGAVFIHLNIIPFHHLIIF). One can recognise a Myb-like domain in the interval 325 to 377 (GNWSLDEQKALMVEVSTLGNKSEINWFFISKQLFLKGISRNARECQRKHESIQ).

The protein localises to the membrane. The protein is Myb-like protein R (mybR) of Dictyostelium discoideum (Social amoeba).